The following is a 776-amino-acid chain: Protein FAM83C (776 aa).

Residues 1–340 (MQGCQAGASI…LYAESQPVEG (340 aa)) are DUF1669. 5 disordered regions span residues 344 to 467 (NEDP…STSP), 494 to 565 (SRLP…SLQH), 617 to 653 (HGQL…DDRR), 669 to 694 (PFRS…VGSA), and 716 to 745 (QGAR…LFAP). Residues 368 to 385 (SATGSSPSSNSLSSIKHS) are compositionally biased toward low complexity. Over residues 452-467 (PWSQSSPALNHSSTSP) the composition is skewed to polar residues. Residues 523–539 (VEEKKVSLSQSHDHLDR) show a composition bias toward basic and acidic residues. Over residues 554–563 (SRVTPDSSSL) the composition is skewed to polar residues.

Belongs to the FAM83 family. As to quaternary structure, directly interacts (via DUF1669) with CSNK1A1 and CSNK1A1L. May interact with RAF1. In terms of processing, phosphorylated by CSNK1A1.

The protein resides in the cytoplasm. Its function is as follows. May play a role in MAPK signaling. The sequence is that of Protein FAM83C from Mus musculus (Mouse).